Reading from the N-terminus, the 379-residue chain is MSKLALLVLEDGTVFRGVSIGADGVSVGEVVFNTSMTGYQEILTDPSYSQQIVTLTYPHIGNTGTNSEDEESSSIHAQGLVIRDLPLIASNFRNEQSLSDYLKSQNIVGIADIDTRKLTRILREKGAQNGCIVAGNNLDEALALAKAKEFPGLKGMDLAKEVTTKEAYQWKQGSWTLESGLPEAKDDSELPYHVVAYDFGAKRNILRMLVDRGCRLTVVPAETSAEEVLALNPDGVFLSNGPGDPEPCTYAIEATKVFLEKGLPIFGICLGHQILALASGAQTVKMKFGHHGANHPVKDLERNVVMITSQNHGFAADEATLPENLRATHVSLFDGSLQGIHRTDKPAFSFQGHPEASPGPHDAAPLFDHFIELIKKHSA.

The interval 1-189 is CPSase; the sequence is MSKLALLVLE…GLPEAKDDSE (189 aa). L-glutamine contacts are provided by Ser47, Gly241, and Gly243. In terms of domain architecture, Glutamine amidotransferase type-1 spans 193–379; it reads HVVAYDFGAK…FIELIKKHSA (187 aa). Cys269 serves as the catalytic Nucleophile. Residues Leu270, Gln273, Asn311, Gly313, and Phe314 each coordinate L-glutamine. Residues His353 and Glu355 contribute to the active site.

This sequence belongs to the CarA family. In terms of assembly, composed of two chains; the small (or glutamine) chain promotes the hydrolysis of glutamine to ammonia, which is used by the large (or ammonia) chain to synthesize carbamoyl phosphate. Tetramer of heterodimers (alpha,beta)4.

The enzyme catalyses hydrogencarbonate + L-glutamine + 2 ATP + H2O = carbamoyl phosphate + L-glutamate + 2 ADP + phosphate + 2 H(+). It carries out the reaction L-glutamine + H2O = L-glutamate + NH4(+). Its pathway is amino-acid biosynthesis; L-arginine biosynthesis; carbamoyl phosphate from bicarbonate: step 1/1. It participates in pyrimidine metabolism; UMP biosynthesis via de novo pathway; (S)-dihydroorotate from bicarbonate: step 1/3. Small subunit of the glutamine-dependent carbamoyl phosphate synthetase (CPSase). CPSase catalyzes the formation of carbamoyl phosphate from the ammonia moiety of glutamine, carbonate, and phosphate donated by ATP, constituting the first step of 2 biosynthetic pathways, one leading to arginine and/or urea and the other to pyrimidine nucleotides. The small subunit (glutamine amidotransferase) binds and cleaves glutamine to supply the large subunit with the substrate ammonia. This chain is Carbamoyl phosphate synthase small chain, found in Vibrio parahaemolyticus serotype O3:K6 (strain RIMD 2210633).